We begin with the raw amino-acid sequence, 525 residues long: Phosphoenolpyruvate carboxykinase (ATP) (525 aa).

Residues arginine 54, tyrosine 190, and lysine 196 each coordinate substrate. ATP contacts are provided by residues lysine 196, histidine 215, and 231–239; that span reads GLSGTGKTT. Residues lysine 196 and histidine 215 each contribute to the Mn(2+) site. Aspartate 252 contributes to the Mn(2+) binding site. Residues glutamate 280, arginine 316, and threonine 441 each contribute to the ATP site. Substrate is bound at residue arginine 316.

The protein belongs to the phosphoenolpyruvate carboxykinase (ATP) family. It depends on Mn(2+) as a cofactor.

The protein localises to the cytoplasm. It catalyses the reaction oxaloacetate + ATP = phosphoenolpyruvate + ADP + CO2. Its pathway is carbohydrate biosynthesis; gluconeogenesis. Involved in the gluconeogenesis. Catalyzes the conversion of oxaloacetate (OAA) to phosphoenolpyruvate (PEP) through direct phosphoryl transfer between the nucleoside triphosphate and OAA. This is Phosphoenolpyruvate carboxykinase (ATP) from Nitratiruptor sp. (strain SB155-2).